Consider the following 385-residue polypeptide: 1-deoxy-D-xylulose 5-phosphate reductoisomerase (385 aa).

The NADPH site is built by Thr13, Gly14, Ser15, Ile16, Asn40, and Asn122. Position 123 (Lys123) interacts with 1-deoxy-D-xylulose 5-phosphate. Position 124 (Glu124) interacts with NADPH. Asp148 is a Mn(2+) binding site. 1-deoxy-D-xylulose 5-phosphate-binding residues include Ser149, Glu150, Ser177, and His200. Glu150 contributes to the Mn(2+) binding site. Gly206 contacts NADPH. 1-deoxy-D-xylulose 5-phosphate contacts are provided by Ser213, Asn218, Lys219, and Glu222. Glu222 contributes to the Mn(2+) binding site.

The protein belongs to the DXR family. The cofactor is Mg(2+). Mn(2+) serves as cofactor.

The enzyme catalyses 2-C-methyl-D-erythritol 4-phosphate + NADP(+) = 1-deoxy-D-xylulose 5-phosphate + NADPH + H(+). It functions in the pathway isoprenoid biosynthesis; isopentenyl diphosphate biosynthesis via DXP pathway; isopentenyl diphosphate from 1-deoxy-D-xylulose 5-phosphate: step 1/6. In terms of biological role, catalyzes the NADPH-dependent rearrangement and reduction of 1-deoxy-D-xylulose-5-phosphate (DXP) to 2-C-methyl-D-erythritol 4-phosphate (MEP). The protein is 1-deoxy-D-xylulose 5-phosphate reductoisomerase of Francisella tularensis subsp. holarctica (strain FTNF002-00 / FTA).